The primary structure comprises 311 residues: Olfactory receptor 1D4 (311 aa).

The Extracellular portion of the chain corresponds to 1–25; the sequence is MDGDNQSENSQFLLLGISESPEQQQ. Asparagine 5 carries an N-linked (GlcNAc...) asparagine glycan. A helical transmembrane segment spans residues 26 to 49; the sequence is ILFWMFLSMYLVTVLGNVLIILAI. Residues 50–57 lie on the Cytoplasmic side of the membrane; sequence SSDSHLHT. Residues 58 to 79 traverse the membrane as a helical segment; that stretch reads PMYFFLANLSFTDLFFVTNTIP. Topologically, residues 80 to 100 are extracellular; it reads KMLVNFQSQNKAISYAGCLTQ. A disulfide bridge links cysteine 97 with cysteine 189. Residues 101 to 120 traverse the membrane as a helical segment; the sequence is LYFLVSLVTLDNLILAVMAY. Residues 121–140 lie on the Cytoplasmic side of the membrane; that stretch reads DRYVAICCPLHYVTAMSPGL. The chain crosses the membrane as a helical span at residues 141-158; sequence CVLLLSLCWGLSVLYGLL. Topologically, residues 159 to 196 are extracellular; it reads LTFLLTRVTFCGPREIHYLFCDMYILLWLACSNTHIIH. Residues 197 to 220 traverse the membrane as a helical segment; it reads TALIATGCFIFLTLLGFMTTSYVR. The Cytoplasmic portion of the chain corresponds to 221–237; that stretch reads IVRTILQMPSASKKYKT. Residues 238–260 form a helical membrane-spanning segment; the sequence is FSTCASHLGVVSLFYGTLAMVYL. Residues 261–271 are Extracellular-facing; the sequence is QPLHTYSMKDS. A helical transmembrane segment spans residues 272–291; the sequence is VATVMYAVLTPMMNPFIYSL. The Cytoplasmic segment spans residues 292–311; the sequence is RNKDMHGAPGRVLWRPFQRP.

This sequence belongs to the G-protein coupled receptor 1 family.

The protein resides in the cell membrane. Its function is as follows. Odorant receptor. The chain is Olfactory receptor 1D4 (OR1D4) from Homo sapiens (Human).